Consider the following 96-residue polypeptide: Protein S100-A10 (96 aa).

The ancestral calcium site stretch occupies residues 62–73; sequence DDCRKGQVNFRS.

The protein belongs to the S-100 family. Tetramer of 2 light chains (p10) and 2 heavy chains (annexin II).

Functionally, because p10 induces the dimerization of annexin II (p36), it may function as a regulator of protein phosphorylation in that the p36 monomer is the preferred target (in vitro) of tyrosine-specific kinase. The polypeptide is Protein S100-A10 (s100a10) (Xenopus laevis (African clawed frog)).